We begin with the raw amino-acid sequence, 128 residues long: Large ribosomal subunit protein bL12 (128 aa).

This sequence belongs to the bacterial ribosomal protein bL12 family. As to quaternary structure, homodimer. Part of the ribosomal stalk of the 50S ribosomal subunit. Forms a multimeric L10(L12)X complex, where L10 forms an elongated spine to which 2 to 4 L12 dimers bind in a sequential fashion. Binds GTP-bound translation factors.

Functionally, forms part of the ribosomal stalk which helps the ribosome interact with GTP-bound translation factors. Is thus essential for accurate translation. This is Large ribosomal subunit protein bL12 from Sulfurihydrogenibium sp. (strain YO3AOP1).